Reading from the N-terminus, the 54-residue chain is Large ribosomal subunit protein bL32c (54 aa).

Positions 1-25 (MAVPKKRTSKAKKNSRKANWKRKAA) are enriched in basic residues. The disordered stretch occupies residues 1-26 (MAVPKKRTSKAKKNSRKANWKRKAAK).

It belongs to the bacterial ribosomal protein bL32 family.

The protein localises to the plastid. Its subcellular location is the chloroplast. This chain is Large ribosomal subunit protein bL32c, found in Thalassiosira pseudonana (Marine diatom).